Here is a 127-residue protein sequence, read N- to C-terminus: MFRTMMRAKLHRATVTEANLNYVGSITIDEDLMDAVNIVENEKVQIVNNNNGARLETYVIKGERGSGVVCLNGAAARLVQPGDKVIIICYGLVTEEEVHKQEPKIAVLDDNNQIIEMLGAEKAGTIL.

Residue Ser-25 is the Schiff-base intermediate with substrate; via pyruvic acid of the active site. Ser-25 carries the pyruvic acid (Ser) modification. Thr-57 serves as a coordination point for substrate. Tyr-58 acts as the Proton donor in catalysis. 73–75 (GAA) is a binding site for substrate.

Belongs to the PanD family. Heterooctamer of four alpha and four beta subunits. Pyruvate serves as cofactor. Is synthesized initially as an inactive proenzyme, which is activated by self-cleavage at a specific serine bond to produce a beta-subunit with a hydroxyl group at its C-terminus and an alpha-subunit with a pyruvoyl group at its N-terminus.

Its subcellular location is the cytoplasm. The catalysed reaction is L-aspartate + H(+) = beta-alanine + CO2. It participates in cofactor biosynthesis; (R)-pantothenate biosynthesis; beta-alanine from L-aspartate: step 1/1. In terms of biological role, catalyzes the pyruvoyl-dependent decarboxylation of aspartate to produce beta-alanine. This chain is Aspartate 1-decarboxylase, found in Bacillus cereus (strain G9842).